A 417-amino-acid polypeptide reads, in one-letter code: NADH-quinone oxidoreductase subunit D (417 aa).

This sequence belongs to the complex I 49 kDa subunit family. As to quaternary structure, NDH-1 is composed of 14 different subunits. Subunits NuoB, C, D, E, F, and G constitute the peripheral sector of the complex.

The protein localises to the cell inner membrane. It carries out the reaction a quinone + NADH + 5 H(+)(in) = a quinol + NAD(+) + 4 H(+)(out). NDH-1 shuttles electrons from NADH, via FMN and iron-sulfur (Fe-S) centers, to quinones in the respiratory chain. The immediate electron acceptor for the enzyme in this species is believed to be ubiquinone. Couples the redox reaction to proton translocation (for every two electrons transferred, four hydrogen ions are translocated across the cytoplasmic membrane), and thus conserves the redox energy in a proton gradient. This Burkholderia ambifaria (strain ATCC BAA-244 / DSM 16087 / CCUG 44356 / LMG 19182 / AMMD) (Burkholderia cepacia (strain AMMD)) protein is NADH-quinone oxidoreductase subunit D.